We begin with the raw amino-acid sequence, 145 residues long: D-aminoacyl-tRNA deacylase (145 aa).

The Gly-cisPro motif, important for rejection of L-amino acids signature appears at 137-138 (GP).

Belongs to the DTD family. Homodimer.

It localises to the cytoplasm. The enzyme catalyses glycyl-tRNA(Ala) + H2O = tRNA(Ala) + glycine + H(+). The catalysed reaction is a D-aminoacyl-tRNA + H2O = a tRNA + a D-alpha-amino acid + H(+). An aminoacyl-tRNA editing enzyme that deacylates mischarged D-aminoacyl-tRNAs. Also deacylates mischarged glycyl-tRNA(Ala), protecting cells against glycine mischarging by AlaRS. Acts via tRNA-based rather than protein-based catalysis; rejects L-amino acids rather than detecting D-amino acids in the active site. By recycling D-aminoacyl-tRNA to D-amino acids and free tRNA molecules, this enzyme counteracts the toxicity associated with the formation of D-aminoacyl-tRNA entities in vivo and helps enforce protein L-homochirality. The sequence is that of D-aminoacyl-tRNA deacylase from Shewanella sediminis (strain HAW-EB3).